A 490-amino-acid chain; its full sequence is Alginate production protein AlgE (490 aa).

A signal peptide spans 1–32 (MNSSRSVNPRPSFAPRALSLAIALLLGAPAFA). Polar residues-rich tracts occupy residues 102–115 (DTLQSDTDDGNNSR) and 343–355 (QFQQTGLESNRSN). Disordered stretches follow at residues 102 to 121 (DTLQSDTDDGNNSRNDGREP) and 331 to 355 (ARGSGGGKDGEEQFQQTGLESNRSN).

It belongs to the AlgE family.

Its subcellular location is the cell outer membrane. It participates in glycan biosynthesis; alginate biosynthesis. Functionally, has non-porin-like, channel-forming properties and probably functions as an alginate permeability pore. In Pseudomonas aeruginosa (strain ATCC 15692 / DSM 22644 / CIP 104116 / JCM 14847 / LMG 12228 / 1C / PRS 101 / PAO1), this protein is Alginate production protein AlgE (algE).